Here is a 934-residue protein sequence, read N- to C-terminus: Protein unc-45 homolog B (934 aa).

3 TPR repeats span residues 9 to 42 (SVQLKEEGNKHFQAGEIDQAIDCYTKAIKTCKKE), 48 to 81 (AVIYRNRSACFLKKENYSNAASDATKAIDVDAAD), and 83 to 115 (KALYRRCQAFEKLGKLDMAFKDVQRCATIEPKN). 3 ARM repeats span residues 174 to 213 (DAGAERIFQNNGVPLLMQLIDTGKPEMILAAIRTLSGMCT), 216 to 255 (RARATAIIHSVGISKLCSIMAVDNEEIALATANLFQCVND), and 753 to 792 (DKLRVKILKEKALPEIENYMFEDHEQIRQAATECMCNLVC).

As to quaternary structure, interacts with apobec2a, apobec2b, hsp90a.1, hsp90a.2, hsp90ab1 and myosin. As to expression, expressed in striated muscle tissue including somites, heart and craniofacial muscle. Detected in mesoderm adjacent to the dorsal midline during the late gastrula stages and in somitic mesoderm during development of trunk skeletal muscle. Also expressed in cranial skeletal muscle and in cardiac and smooth muscle. Detected in somitic muscle and heart primordium of 24 hour embryos. At later stages, expressed in muscles of pectoral fins, jaw, branchial arches and eye.

It localises to the cytoplasm. Its subcellular location is the myofibril. The protein resides in the sarcomere. It is found in the z line. The protein localises to the a band. It localises to the perinuclear region. Acts as a co-chaperone for HSP90 and is required for proper folding of the myosin motor domain. Plays a role in sarcomere formation during muscle cell development. Required for myoseptal integrity, myofiber attachment, motility and craniofacial development. Is necessary for normal early lens development. This is Protein unc-45 homolog B from Danio rerio (Zebrafish).